The chain runs to 152 residues: Small ribosomal subunit protein uS15 (152 aa).

Over residues 1-19 (MAKMHTRRKGRSRSTRPVR) the composition is skewed to basic residues. The interval 1-21 (MAKMHTRRKGRSRSTRPVRKT) is disordered.

Belongs to the universal ribosomal protein uS15 family. In terms of assembly, part of the 30S ribosomal subunit.

The sequence is that of Small ribosomal subunit protein uS15 from Methanocella arvoryzae (strain DSM 22066 / NBRC 105507 / MRE50).